The sequence spans 424 residues: Kynureninase (424 aa).

Residues leucine 106, threonine 107, 134–137, aspartate 219, histidine 222, and tyrosine 244 contribute to the pyridoxal 5'-phosphate site; that span reads FPSD. Lysine 245 carries the post-translational modification N6-(pyridoxal phosphate)lysine. Pyridoxal 5'-phosphate-binding residues include tryptophan 274 and asparagine 302.

The protein belongs to the kynureninase family. In terms of assembly, homodimer. Pyridoxal 5'-phosphate is required as a cofactor.

It carries out the reaction L-kynurenine + H2O = anthranilate + L-alanine + H(+). The catalysed reaction is 3-hydroxy-L-kynurenine + H2O = 3-hydroxyanthranilate + L-alanine + H(+). The protein operates within amino-acid degradation; L-kynurenine degradation; L-alanine and anthranilate from L-kynurenine: step 1/1. It participates in cofactor biosynthesis; NAD(+) biosynthesis; quinolinate from L-kynurenine: step 2/3. Functionally, catalyzes the cleavage of L-kynurenine (L-Kyn) and L-3-hydroxykynurenine (L-3OHKyn) into anthranilic acid (AA) and 3-hydroxyanthranilic acid (3-OHAA), respectively. The protein is Kynureninase of Xanthomonas campestris pv. campestris (strain B100).